Consider the following 430-residue polypeptide: Crotonyl-CoA carboxylase/reductase (430 aa).

It belongs to the zinc-containing alcohol dehydrogenase family. Crotonyl-CoA carboxylase/reductase subfamily. In terms of assembly, homodimer. Requires Despite some sequence similarity to zinc-containing alcohol dehydrogenases, this enzyme does not bind any metals. as cofactor.

It catalyses the reaction (2S)-ethylmalonyl-CoA + NADP(+) = (2E)-butenoyl-CoA + CO2 + NADPH. The catalysed reaction is (S)-methylmalonyl-CoA + NADP(+) = acryloyl-CoA + CO2 + NADPH. It carries out the reaction butanoyl-CoA + NADP(+) = (2E)-butenoyl-CoA + NADPH + H(+). Catalyzes the NADPH-dependent reductive carboxylation of crotonyl-CoA ((2E)-butenoyl-CoA) to (2S)-ethylmalonyl-CoA, in the presence of CO2. This is a key reaction in the ethylmalonyl-CoA pathway for acetyl-CoA assimilation required for R.sphaeroides growth on acetate as sole carbon source. Is also able to accept acryloyl-CoA as an alternative substrate, yielding (2S)-methylmalonyl-CoA. To a lesser extent, when CO2 is absent, the enzyme also catalyzes the reduction of crotonyl-CoA to butanoyl-CoA. In Cereibacter sphaeroides (strain ATCC 17023 / DSM 158 / JCM 6121 / CCUG 31486 / LMG 2827 / NBRC 12203 / NCIMB 8253 / ATH 2.4.1.) (Rhodobacter sphaeroides), this protein is Crotonyl-CoA carboxylase/reductase.